The primary structure comprises 99 residues: DNA-binding protein HU (99 aa).

This sequence belongs to the bacterial histone-like protein family. As to quaternary structure, homodimer.

In terms of biological role, histone-like DNA-binding protein which is capable of wrapping DNA to stabilize it, and thus to prevent its denaturation under extreme environmental conditions. The chain is DNA-binding protein HU (hup) from Rickettsia typhi (strain ATCC VR-144 / Wilmington).